The following is a 137-amino-acid chain: Fluoride-specific ion channel FluC 4 (137 aa).

A run of 4 helical transmembrane segments spans residues 20 to 40 (AAIGALLRFLSGWVIVAILGA), 43 to 63 (LWGTSFVNIVGSFIIMFFATL), 83 to 103 (GLCGGLTTFSSMSLDTFLLVL), and 110 to 130 (ALAYLCGLVFLSLSAAMLGLI). Na(+)-binding residues include G86 and T89.

This sequence belongs to the fluoride channel Fluc/FEX (TC 1.A.43) family.

It is found in the cell inner membrane. It catalyses the reaction fluoride(in) = fluoride(out). Its activity is regulated as follows. Na(+) is not transported, but it plays an essential structural role and its presence is essential for fluoride channel function. Fluoride-specific ion channel. Important for reducing fluoride concentration in the cell, thus reducing its toxicity. This Brucella suis biovar 1 (strain 1330) protein is Fluoride-specific ion channel FluC 4.